A 154-amino-acid chain; its full sequence is Putative nickel-responsive regulator (154 aa).

Positions 95, 106, 108, and 114 each coordinate Ni(2+).

It belongs to the transcriptional regulatory CopG/NikR family. It depends on Ni(2+) as a cofactor.

In terms of biological role, transcriptional regulator. The protein is Putative nickel-responsive regulator of Caldanaerobacter subterraneus subsp. tengcongensis (strain DSM 15242 / JCM 11007 / NBRC 100824 / MB4) (Thermoanaerobacter tengcongensis).